The following is a 425-amino-acid chain: Xyloglucan O-acetyltransferase 2 (425 aa).

Residues 1 to 18 (MGSPFKDHHTLHPSLVRK) are Cytoplasmic-facing. Residues 19–38 (LIPWTFYAMVPLVLFRVYLY) form a helical; Signal-anchor for type II membrane protein membrane-spanning segment. The Lumenal portion of the chain corresponds to 39–425 (PYPLHHTTTT…KWEYASRREQ (387 aa)). 4 disulfides stabilise this stretch: Cys-68–Cys-118, Cys-89–Cys-154, Cys-98–Cys-398, and Cys-313–Cys-394. A glycan (N-linked (GlcNAc...) asparagine) is linked at Asn-85. The GDS motif motif lies at 141 to 143 (GDS). Catalysis depends on Ser-143, which acts as the Nucleophile. Asn-183 and Asn-259 each carry an N-linked (GlcNAc...) asparagine glycan. The Proton donor role is filled by Asp-393. The DXXH motif signature appears at 393-396 (DCVH). The Proton acceptor role is filled by His-396.

It belongs to the PC-esterase family. TBL subfamily.

Its subcellular location is the golgi apparatus membrane. In terms of biological role, xyloglucan acetyltransferase that catalyzes the acetylation of fucosylated Gal residues on xyloglucan side chains. Predominantly catalyze 6-O-monoacetylation of Gal residues in the Fuc-Gal-Xyl trisaccharide side chains of xyloglucan oligomers. This is Xyloglucan O-acetyltransferase 2 from Populus trichocarpa (Western balsam poplar).